Here is a 410-residue protein sequence, read N- to C-terminus: Cathepsin D (410 aa).

Positions 1-20 (MKTPGVLLLILGLLASSSFA) are cleaved as a signal peptide. Positions 21 to 64 (IIRIPLRKFTSIRRTMTEVGGSVEDLILKGPITKYSMQSSPKTT) are cleaved as a propeptide — activation peptide. One can recognise a Peptidase A1 domain in the interval 79-405 (YYGDIGIGTP…DRDNNRVGFA (327 aa)). 2 cysteine pairs are disulfide-bonded: C91–C160 and C110–C117. D97 is an active-site residue. N134 carries an N-linked (GlcNAc...) asparagine glycan. N-linked (GlcNAc...) (high mannose) asparagine glycosylation is present at N261. A disulfide bridge links C284 with C288. The active site involves D293. A disulfide bond links C327 and C364.

This sequence belongs to the peptidase A1 family. Consists of a light chain and a heavy chain. Interacts with ADAM30; this leads to activation of CTSD. Interacts with GRN; stabilizes CTSD; increases its proteolytic activity. Post-translationally, N- and O-glycosylated. In terms of processing, undergoes proteolytic cleavage and activation by ADAM30.

The protein localises to the lysosome. It localises to the melanosome. Its subcellular location is the secreted. The protein resides in the extracellular space. It catalyses the reaction Specificity similar to, but narrower than, that of pepsin A. Does not cleave the 4-Gln-|-His-5 bond in B chain of insulin.. Functionally, acid protease active in intracellular protein breakdown. Plays a role in APP processing following cleavage and activation by ADAM30 which leads to APP degradation. The sequence is that of Cathepsin D (Ctsd) from Mus musculus (Mouse).